A 161-amino-acid chain; its full sequence is 2-C-methyl-D-erythritol 2,4-cyclodiphosphate synthase (161 aa).

The a divalent metal cation site is built by Asp-10 and His-12. 4-CDP-2-C-methyl-D-erythritol 2-phosphate-binding positions include 10–12 (DVH) and 36–37 (HS). His-44 serves as a coordination point for a divalent metal cation. 4-CDP-2-C-methyl-D-erythritol 2-phosphate is bound by residues 58 to 60 (DIG), 63 to 67 (FSDTD), and Arg-144.

This sequence belongs to the IspF family. Homotrimer. Requires a divalent metal cation as cofactor.

It carries out the reaction 4-CDP-2-C-methyl-D-erythritol 2-phosphate = 2-C-methyl-D-erythritol 2,4-cyclic diphosphate + CMP. It participates in isoprenoid biosynthesis; isopentenyl diphosphate biosynthesis via DXP pathway; isopentenyl diphosphate from 1-deoxy-D-xylulose 5-phosphate: step 4/6. Its function is as follows. Involved in the biosynthesis of isopentenyl diphosphate (IPP) and dimethylallyl diphosphate (DMAPP), two major building blocks of isoprenoid compounds. Catalyzes the conversion of 4-diphosphocytidyl-2-C-methyl-D-erythritol 2-phosphate (CDP-ME2P) to 2-C-methyl-D-erythritol 2,4-cyclodiphosphate (ME-CPP) with a corresponding release of cytidine 5-monophosphate (CMP). The protein is 2-C-methyl-D-erythritol 2,4-cyclodiphosphate synthase of Burkholderia lata (strain ATCC 17760 / DSM 23089 / LMG 22485 / NCIMB 9086 / R18194 / 383).